We begin with the raw amino-acid sequence, 89 residues long: Small ribosomal subunit protein uS15 (89 aa).

The segment at 1–24 (MSLDTTEKQQLINSHQTHATDTGS) is disordered. A compositionally biased stretch (polar residues) spans 8-24 (KQQLINSHQTHATDTGS).

This sequence belongs to the universal ribosomal protein uS15 family. Part of the 30S ribosomal subunit. Forms a bridge to the 50S subunit in the 70S ribosome, contacting the 23S rRNA.

In terms of biological role, one of the primary rRNA binding proteins, it binds directly to 16S rRNA where it helps nucleate assembly of the platform of the 30S subunit by binding and bridging several RNA helices of the 16S rRNA. Its function is as follows. Forms an intersubunit bridge (bridge B4) with the 23S rRNA of the 50S subunit in the ribosome. The sequence is that of Small ribosomal subunit protein uS15 from Synechococcus sp. (strain CC9311).